A 643-amino-acid polypeptide reads, in one-letter code: Tigger transposable element-derived protein 5 (643 aa).

The tract at residues 1–50 (MYSAGPPAVPAPRRCRRPPPGRPMQPPRPPAPAPVPAARPPPPAPGPRPR) is disordered. The span at 20-48 (PGRPMQPPRPPAPAPVPAARPPPPAPGPR) shows a compositional bias: pro residues. An HTH psq-type domain is found at 52 to 103 (AVKMAFRKAYSIKDKLQAIERVKGGERQASVCRDFGVPGGTLRGWLKDEPKL). 2 DNA-binding regions (H-T-H motif) span residues 79-99 (QASVCRDFGVPGGTLRGWLKD) and 150-183 (PLIQAQAEAFARQIYGPECTFKASHGWFWRWQKR). One can recognise an HTH CENPB-type domain in the interval 117–190 (QRKKMRLANE…QKRHGISSQR (74 aa)). The tract at residues 197–236 (PVAAGPAPGPPVKQEPAQPTRAGPLPDRAASTPAPAEGGY) is disordered. The region spanning 238–358 (DEQIYNANVT…LQQKAVLLVA (121 aa)) is the DDE-1 domain. The interval 366-395 (EARMPALEESEETRRRCRPEPTGPPEELQT) is disordered.

Belongs to the tigger transposable element derived protein family.

It is found in the nucleus. This chain is Tigger transposable element-derived protein 5 (TIGD5), found in Bos taurus (Bovine).